Reading from the N-terminus, the 114-residue chain is Nucleoid-associated protein NT01CX_0824 (114 aa).

Belongs to the YbaB/EbfC family. Homodimer.

It localises to the cytoplasm. The protein localises to the nucleoid. Its function is as follows. Binds to DNA and alters its conformation. May be involved in regulation of gene expression, nucleoid organization and DNA protection. The polypeptide is Nucleoid-associated protein NT01CX_0824 (Clostridium novyi (strain NT)).